The primary structure comprises 227 residues: MAHRAQVGLQDATSPIMEELVIFHDHALMIIFLICFLVLYALFLTLTTKLTNTNISDAQEMETIWTTLPAIILILIALPSLRILYLTDEINDPSFTIKSIGHQWYWTYEYTDYGGLIFNSYMLPPLFLEPGDLRLLDVDNRVVLPVEAPVRMMITSQDVLHSWTVPSLGLKTDAIPGRLNQTTFTATRPGVYYGQCSEICGANHSFMPIVLELIPLKIFEMGPVFAL.

Over 1 to 14 the chain is Mitochondrial intermembrane; that stretch reads MAHRAQVGLQDATS. A helical transmembrane segment spans residues 15–45; that stretch reads PIMEELVIFHDHALMIIFLICFLVLYALFLT. Residues 46–59 are Mitochondrial matrix-facing; that stretch reads LTTKLTNTNISDAQ. A helical membrane pass occupies residues 60-87; that stretch reads EMETIWTTLPAIILILIALPSLRILYLT. Residues 88 to 227 lie on the Mitochondrial intermembrane side of the membrane; that stretch reads DEINDPSFTI…IFEMGPVFAL (140 aa). Residues histidine 161, cysteine 196, glutamate 198, cysteine 200, histidine 204, and methionine 207 each contribute to the Cu cation site. Residue glutamate 198 participates in Mg(2+) binding.

It belongs to the cytochrome c oxidase subunit 2 family. Component of the cytochrome c oxidase (complex IV, CIV), a multisubunit enzyme composed of 14 subunits. The complex is composed of a catalytic core of 3 subunits MT-CO1, MT-CO2 and MT-CO3, encoded in the mitochondrial DNA, and 11 supernumerary subunits COX4I, COX5A, COX5B, COX6A, COX6B, COX6C, COX7A, COX7B, COX7C, COX8 and NDUFA4, which are encoded in the nuclear genome. The complex exists as a monomer or a dimer and forms supercomplexes (SCs) in the inner mitochondrial membrane with NADH-ubiquinone oxidoreductase (complex I, CI) and ubiquinol-cytochrome c oxidoreductase (cytochrome b-c1 complex, complex III, CIII), resulting in different assemblies (supercomplex SCI(1)III(2)IV(1) and megacomplex MCI(2)III(2)IV(2)). Found in a complex with TMEM177, COA6, COX18, COX20, SCO1 and SCO2. Interacts with TMEM177 in a COX20-dependent manner. Interacts with COX20. Interacts with COX16. Requires Cu cation as cofactor.

It is found in the mitochondrion inner membrane. The enzyme catalyses 4 Fe(II)-[cytochrome c] + O2 + 8 H(+)(in) = 4 Fe(III)-[cytochrome c] + 2 H2O + 4 H(+)(out). In terms of biological role, component of the cytochrome c oxidase, the last enzyme in the mitochondrial electron transport chain which drives oxidative phosphorylation. The respiratory chain contains 3 multisubunit complexes succinate dehydrogenase (complex II, CII), ubiquinol-cytochrome c oxidoreductase (cytochrome b-c1 complex, complex III, CIII) and cytochrome c oxidase (complex IV, CIV), that cooperate to transfer electrons derived from NADH and succinate to molecular oxygen, creating an electrochemical gradient over the inner membrane that drives transmembrane transport and the ATP synthase. Cytochrome c oxidase is the component of the respiratory chain that catalyzes the reduction of oxygen to water. Electrons originating from reduced cytochrome c in the intermembrane space (IMS) are transferred via the dinuclear copper A center (CU(A)) of subunit 2 and heme A of subunit 1 to the active site in subunit 1, a binuclear center (BNC) formed by heme A3 and copper B (CU(B)). The BNC reduces molecular oxygen to 2 water molecules using 4 electrons from cytochrome c in the IMS and 4 protons from the mitochondrial matrix. The sequence is that of Cytochrome c oxidase subunit 2 (MT-CO2) from Pongo pygmaeus (Bornean orangutan).